The following is a 469-amino-acid chain: Regulator of G-protein signaling 7 (469 aa).

The DEP domain occupies 37-112; sequence EKNGIPIRTV…DDGTFYRFQT (76 aa). Phosphoserine is present on residues serine 229 and serine 241. Residues 235-256 are disordered; the sequence is NDIRSHSPTHTPTPETKPPTED. Residue threonine 243 is modified to Phosphothreonine. The region spanning 255–316 is the G protein gamma domain; the sequence is EDELQQQIKY…LSDDTTFWEL (62 aa). Positions 333-448 constitute an RGS domain; sequence GMDEALKDPV…IRSSAYQELL (116 aa). Serine 434 carries the phosphoserine modification.

Interacts with GNB5, forming the RGS7-GNB5 complex. Interacts with GPR158; promotes the GTPase activator activity of the RGS7-GNB5 complex in absence of glycine, in contrast GTPase activator activity of the RGS7-GNB5 complex is inhibited in presence of glycine. Interacts with GPR179. Interacts with PKD1; this prevents rapid proteasomal degradation. Interacts with RGS7BP, leading to regulate the subcellular location of the heterodimer formed with GNB5. Interacts (phosphorylated form) with 14-3-3 protein YWHAQ. Interacts with SNAPIN. Interacts with GNAI1. Interacts with GNAO1, GNAI3 and GNAZ. In terms of processing, palmitoylated. Ubiquitinated, leading to rapid proteasomal degradation. Post-translationally, phosphorylation and subsequent interaction with 14-3-3 proteins inhibits GAP activity. As to expression, detected in retina (at protein level).

It is found in the cytoplasm. The protein resides in the cytosol. Its subcellular location is the cell membrane. It localises to the membrane. In terms of biological role, GTPase activator component of the RGS7-GNB5 complex that regulates G protein-coupled receptor signaling cascades. The RGS7-GNB5 complex acts as an inhibitor signal transduction by promoting the GTPase activity of G protein alpha subunits, such as GNAO1, thereby driving them into their inactive GDP-bound form. May play a role in synaptic vesicle exocytosis. Glycine-dependent regulation of the RGS7-GNB5 complex by GPR158 affects mood and cognition via its ability to regulate neuronal excitability in L2/L3 pyramidal neurons of the prefrontal cortex. Modulates the activity of potassium channels that are activated by GNAO1 in response to muscarinic acetylcholine receptor M2/CHRM2 signaling. This chain is Regulator of G-protein signaling 7 (RGS7), found in Bos taurus (Bovine).